Here is a 1149-residue protein sequence, read N- to C-terminus: Nitric oxide synthase, inducible (1149 aa).

The segment at 22–83 (KDINNNVGKA…HKPSPTCSQH (62 aa)) is disordered. Positions 23-27 (DINNN) match the DINNN-motif; mediates interaction with SPSB1, SPSB2 and SPSB4 motif. Polar residues predominate over residues 50–61 (KHQNGSSQSLTG). 2 residues coordinate Zn(2+): Cys109 and Cys114. Residue Ser117 coordinates (6R)-L-erythro-5,6,7,8-tetrahydrobiopterin. Cys199 is a heme b binding site. L-arginine-binding residues include Gln262, Trp371, Tyr372, and Glu376. 4 residues coordinate (6R)-L-erythro-5,6,7,8-tetrahydrobiopterin: Arg380, Ile461, Trp462, and Phe475. Position 490 (Tyr490) interacts with heme b. The interval 514 to 534 (FRVLAKATLFASLLMRKMMAS) is calmodulin-binding. One can recognise a Flavodoxin-like domain in the interval 538 to 676 (ATILFATETG…AFCTWAVQTF (139 aa)). 5 residues coordinate FMN: Thr544, Glu545, Thr546, Lys548, and Ser549. Tyr574 bears the Phosphotyrosine mark. FMN is bound by residues Ser590, Thr591, Ser627, Arg632, Cys634, Glu660, and Gln664. An FAD-binding FR-type domain is found at 729 to 969 (TDVFTMRLKS…VRSVNSFQLP (241 aa)). Arg749 is an NADP(+) binding site. FAD contacts are provided by His771, Arg905, Tyr907, Ser908, Thr923, and Ala925. An NADP(+)-binding site is contributed by Thr928. Tyr929, Val942, Cys943, and Ser944 together coordinate FAD. 8 residues coordinate NADP(+): Thr983, Arg1016, Ser1045, Arg1046, Lys1052, Tyr1054, Gln1056, and Asp1089.

Belongs to the NOS family. In terms of assembly, homodimer. Interacts with NHERF1. Interacts with GAPDH; induced by oxidatively-modified low-densitity lipoprotein (LDL(ox)). Interacts with S100A8 and S100A9 to form the iNOS-S100A8/9 transnitrosylase complex. Interacts with SPSB1, SPSB2 and SPSB4. Interacts with ELOC and CUL5 in the presence of SPSB1 or SPSB2 or SPSB4. Forms a complex with ASL, ASS1 and HSP90AA1; the complex regulates cell-autonomous L-arginine synthesis and citrulline recycling while channeling extracellular L-arginine to nitric oxide synthesis pathway. Requires heme b as cofactor. FAD is required as a cofactor. It depends on FMN as a cofactor. (6R)-L-erythro-5,6,7,8-tetrahydrobiopterin serves as cofactor. In terms of processing, polyubiquitinated; mediated by SPSB1, SPSB2 and SPSB4, leading to proteasomal degradation. In terms of tissue distribution, expressed in the lung and colon. Not detected in the heart, aorta, liver, kidney, and spleen.

The protein resides in the cytoplasm. It localises to the cytosol. The catalysed reaction is 2 L-arginine + 3 NADPH + 4 O2 + H(+) = 2 L-citrulline + 2 nitric oxide + 3 NADP(+) + 4 H2O. Regulated by calcium/calmodulin. In terms of biological role, produces nitric oxide (NO) which is a messenger molecule with diverse functions throughout the body. In macrophages, NO mediates tumoricidal and bactericidal actions. Also has nitrosylase activity and mediates cysteine S-nitrosylation of cytoplasmic target proteins such PTGS2/COX2. As component of the iNOS-S100A8/9 transnitrosylase complex involved in the selective inflammatory stimulus-dependent S-nitrosylation of GAPDH implicated in regulation of the GAIT complex activity and probably multiple targets including ANXA5, EZR, MSN and VIM. Involved in inflammation, enhances the synthesis of pro-inflammatory mediators such as IL6 and IL8. The sequence is that of Nitric oxide synthase, inducible (NOS2) from Cavia porcellus (Guinea pig).